Here is a 311-residue protein sequence, read N- to C-terminus: Methionyl-tRNA formyltransferase (311 aa).

112 to 115 (SLLP) is a binding site for (6S)-5,6,7,8-tetrahydrofolate.

The protein belongs to the Fmt family.

The catalysed reaction is L-methionyl-tRNA(fMet) + (6R)-10-formyltetrahydrofolate = N-formyl-L-methionyl-tRNA(fMet) + (6S)-5,6,7,8-tetrahydrofolate + H(+). Functionally, attaches a formyl group to the free amino group of methionyl-tRNA(fMet). The formyl group appears to play a dual role in the initiator identity of N-formylmethionyl-tRNA by promoting its recognition by IF2 and preventing the misappropriation of this tRNA by the elongation apparatus. This Bradyrhizobium diazoefficiens (strain JCM 10833 / BCRC 13528 / IAM 13628 / NBRC 14792 / USDA 110) protein is Methionyl-tRNA formyltransferase.